The primary structure comprises 361 residues: Mannose-1-phosphate guanylyltransferase 1 (361 aa).

Positions 6 and 7 each coordinate GDP-alpha-D-mannose. Residues Gly9, Gly11, Thr12, Arg13, and Lys23 each coordinate diphosphate. GDP-alpha-D-mannose-binding residues include Gly85, Asn109, Asp111, Gly146, and Asn173.

The protein belongs to the transferase hexapeptide repeat family. In terms of assembly, interacts in vitro with CSN5A and CSN5B, but in planta only with CSN5B, which targets CYT1 for degradation in the dark by the 26S proteasome. Forms homodimers in the unliganded structure. The product-bound structure is composed of six dimers that form a dodecameric assembly.

It localises to the cytoplasm. It is found in the nucleus. The catalysed reaction is alpha-D-mannose 1-phosphate + GTP + H(+) = GDP-alpha-D-mannose + diphosphate. It functions in the pathway nucleotide-sugar biosynthesis; GDP-alpha-D-mannose biosynthesis; GDP-alpha-D-mannose from alpha-D-mannose 1-phosphate (GTP route): step 1/1. In terms of biological role, essential protein during embryogenesis. Catalyzes a reaction of the Smirnoff-Wheeler pathway, the major route to ascorbate biosynthesis in plants. Plays an essential role in plant growth and development and cell-wall architecture. Provides GDP-mannose, used for cell wall carbohydrate biosynthesis, protein N-glycosylation, as well as for the biosynthesis of the antioxidant ascorbate. The sequence is that of Mannose-1-phosphate guanylyltransferase 1 from Arabidopsis thaliana (Mouse-ear cress).